Reading from the N-terminus, the 1639-residue chain is RIMS-binding protein 3B (1639 aa).

Disordered stretches follow at residues 1–22 (MAKDSPSPLGASPKKPGCSSPA), 215–240 (GSPDPQAVHSLEEPLPQTSSGSCHAP), and 295–364 (SLDS…LTPS). The stretch at 21-143 (PAAAVLENQR…ELQRQLAEEL (123 aa)) forms a coiled coil. The span at 326-339 (SPPPSPLPPPPPPS) shows a compositional bias: pro residues. Coiled-coil stretches lie at residues 409–442 (QADEKVKRLKVKRAELTGLARRLADRARELQETN) and 480–619 (LAKD…AEEN). Residues 697 to 811 (CRPGHPPEQP…DRDTASEVDD (115 aa)) are disordered. Composition is skewed to polar residues over residues 707–718 (WETSQMPESQVK) and 761–775 (SVPQVSETVPASQPL). The segment covering 776–790 (SKKTSSQSNSSSEGS) has biased composition (low complexity). Residues 832–899 (PKLKIFMAQY…PSNFVEQIPD (68 aa)) form the SH3 1 domain. Fibronectin type-III domains lie at 995-1083 (APMQ…TLLA) and 1088-1184 (PPLE…IPED). Disordered regions lie at residues 1251–1273 (PRRQSPVSNLGSEGECPSSGAGS), 1292–1325 (QKSPQNHRPPSVSDQPGEKENCYQHMGTSKSPAP), and 1392–1413 (GTERREERREPEPHSRQGQALG). The segment covering 1293 to 1305 (KSPQNHRPPSVSD) has biased composition (polar residues). A compositionally biased stretch (basic and acidic residues) spans 1392-1406 (GTERREERREPEPHS). SH3 domains are found at residues 1452 to 1520 (TPAR…EMEV) and 1569 to 1636 (WTPK…HMSL).

Belongs to the RIMBP family. Interacts with LRGUK (via guanylate kinase-like domain). Interacts (via C-terminus) with HOOK1 (via coiled-coil region).

The protein resides in the cytoplasm. Its subcellular location is the cytoskeleton. Probable component of the manchette, a microtubule-based structure which plays a key role in sperm head morphogenesis during late stages of sperm development. The chain is RIMS-binding protein 3B (RIMBP3B) from Homo sapiens (Human).